The primary structure comprises 215 residues: Penicillin-binding protein activator LpoB (215 aa).

An N-terminal signal peptide occupies residues 1–19 (MMKMCRYALITALAIFLAG). C20 carries the N-palmitoyl cysteine lipid modification. C20 is lipidated: S-diacylglycerol cysteine. Positions 28 to 78 (APVEEAKPQPQQPAQPQPTVPTVPAVPSVPAQPGPIEHQDQQSGQPAPRVR) are disordered. Positions 37 to 48 (PQQPAQPQPTVP) are enriched in pro residues. Residues 49 to 58 (TVPAVPSVPA) show a composition bias toward low complexity.

It belongs to the LpoB family. In terms of assembly, interacts with PBP1b.

The protein localises to the cell outer membrane. Functionally, regulator of peptidoglycan synthesis that is essential for the function of penicillin-binding protein 1B (PBP1b). This is Penicillin-binding protein activator LpoB from Klebsiella pneumoniae subsp. pneumoniae (strain ATCC 700721 / MGH 78578).